The chain runs to 676 residues: Cysteine-rich receptor-like protein kinase 4 (676 aa).

A signal peptide spans 1-16; sequence MSFFWLFPFLLHLSFA. Residues 17-287 are Extracellular-facing; sequence DSLSPLSAPV…ISERGKGRNS (271 aa). Gnk2-homologous domains lie at 31 to 135 and 146 to 246; these read HLNH…HRNI and ILLN…NYSF. N-linked (GlcNAc...) asparagine glycosylation is found at asparagine 33, asparagine 46, asparagine 64, asparagine 152, asparagine 181, asparagine 243, and asparagine 248. The segment at 252 to 279 is disordered; it reads TRSSSPPSLPPRSTPQQQLKLAPPPLIS. The N-linked (GlcNAc...) asparagine glycan is linked to asparagine 286. A helical transmembrane segment spans residues 288-308; the sequence is SVIIVVVVPIIALLLLFVAFF. Topologically, residues 309–676 are cytoplasmic; sequence SLRAKKTRTN…DASITNVTPR (368 aa). Residues 351-631 enclose the Protein kinase domain; that stretch reads FCETNKLGQG…QMLTTSSIAL (281 aa). ATP is bound by residues 357–365 and lysine 379; that span reads LGQGGFGEV. Tyrosine 424 is modified (phosphotyrosine). The active-site Proton acceptor is aspartate 476. Threonine 516 is modified (phosphothreonine). The residue at position 524 (tyrosine 524) is a Phosphotyrosine.

This sequence belongs to the protein kinase superfamily. Ser/Thr protein kinase family. CRK subfamily.

The protein localises to the membrane. The catalysed reaction is L-seryl-[protein] + ATP = O-phospho-L-seryl-[protein] + ADP + H(+). It catalyses the reaction L-threonyl-[protein] + ATP = O-phospho-L-threonyl-[protein] + ADP + H(+). This chain is Cysteine-rich receptor-like protein kinase 4 (CRK4), found in Arabidopsis thaliana (Mouse-ear cress).